A 580-amino-acid chain; its full sequence is Isocitrate lyase (580 aa).

Residue 106-108 (SGW) participates in substrate binding. Mg(2+) is bound at residue Asp177. Cys215 serves as the catalytic Proton acceptor. Substrate is bound by residues 216–217 (GH), Arg252, 441–445 (NLSPS), and Thr476. The Microbody targeting signal signature appears at 578 to 580 (SRM).

The protein belongs to the isocitrate lyase/PEP mutase superfamily. Isocitrate lyase family. Homotetramer. Mg(2+) serves as cofactor.

Its subcellular location is the glyoxysome. It catalyses the reaction D-threo-isocitrate = glyoxylate + succinate. It functions in the pathway carbohydrate metabolism; glyoxylate cycle; (S)-malate from isocitrate: step 1/2. Its function is as follows. Involved in storage lipid mobilization during the growth of higher plant seedling. The protein is Isocitrate lyase (ICL 8) of Pinus taeda (Loblolly pine).